The chain runs to 302 residues: Dermonecrotic toxin LiSicTox-alphaIA1bii (302 aa).

An N-terminal signal peptide occupies residues 1-14 (ARVVLGCWSVLSQA). A propeptide spanning residues 15 to 22 (AQTDDEER) is cleaved from the precursor. Histidine 34 is a catalytic residue. Mg(2+) contacts are provided by glutamate 54 and aspartate 56. Catalysis depends on histidine 70, which acts as the Nucleophile. Disulfide bonds link cysteine 74-cysteine 80 and cysteine 76-cysteine 219. Aspartate 114 is a Mg(2+) binding site.

This sequence belongs to the arthropod phospholipase D family. Class II subfamily. Class IIa sub-subfamily. Mg(2+) is required as a cofactor. In terms of tissue distribution, expressed by the venom gland.

It localises to the secreted. It catalyses the reaction an N-(acyl)-sphingosylphosphocholine = an N-(acyl)-sphingosyl-1,3-cyclic phosphate + choline. The catalysed reaction is an N-(acyl)-sphingosylphosphoethanolamine = an N-(acyl)-sphingosyl-1,3-cyclic phosphate + ethanolamine. It carries out the reaction a 1-acyl-sn-glycero-3-phosphocholine = a 1-acyl-sn-glycero-2,3-cyclic phosphate + choline. The enzyme catalyses a 1-acyl-sn-glycero-3-phosphoethanolamine = a 1-acyl-sn-glycero-2,3-cyclic phosphate + ethanolamine. Functionally, dermonecrotic toxins cleave the phosphodiester linkage between the phosphate and headgroup of certain phospholipids (sphingolipid and lysolipid substrates), forming an alcohol (often choline) and a cyclic phosphate. This toxin acts on sphingomyelin (SM). It may also act on ceramide phosphoethanolamine (CPE), lysophosphatidylcholine (LPC) and lysophosphatidylethanolamine (LPE), but not on lysophosphatidylserine (LPS), and lysophosphatidylglycerol (LPG). It acts by transphosphatidylation, releasing exclusively cyclic phosphate products as second products. Induces hemolysis, dermonecrosis, vascular permeability and platelet aggregation. This is Dermonecrotic toxin LiSicTox-alphaIA1bii from Loxosceles intermedia (Brown spider).